Consider the following 53-residue polypeptide: Large ribosomal subunit protein eL24 (53 aa).

Zn(2+) contacts are provided by Cys-4, Cys-7, Cys-30, and Cys-34. A C4-type zinc finger spans residues 4-34 (CSFCHEEIEPGTGKMYVKRDGTIYFFCSSKC).

It belongs to the eukaryotic ribosomal protein eL24 family. In terms of assembly, part of the 50S ribosomal subunit. Forms a cluster with proteins L3 and L14. Requires Zn(2+) as cofactor.

Its function is as follows. Binds to the 23S rRNA. This Methanothermobacter thermautotrophicus (strain ATCC 29096 / DSM 1053 / JCM 10044 / NBRC 100330 / Delta H) (Methanobacterium thermoautotrophicum) protein is Large ribosomal subunit protein eL24.